Reading from the N-terminus, the 20-residue chain is Fibrinogen beta chain (20 aa).

Y5 is subject to Sulfotyrosine.

In terms of assembly, heterohexamer; disulfide linked. Contains 2 sets of 3 non-identical chains (alpha, beta and gamma). The 2 heterotrimers are in head to head conformation with the N-termini in a small central domain. In terms of processing, conversion of fibrinogen to fibrin is triggered by thrombin, which cleaves fibrinopeptides A and B from alpha and beta chains, and thus exposes the N-terminal polymerization sites responsible for the formation of the soft clot.

It is found in the secreted. Cleaved by the protease thrombin to yield monomers which, together with fibrinogen alpha (FGA) and fibrinogen gamma (FGG), polymerize to form an insoluble fibrin matrix. Fibrin has a major function in hemostasis as one of the primary components of blood clots. In addition, functions during the early stages of wound repair to stabilize the lesion and guide cell migration during re-epithelialization. Was originally thought to be essential for platelet aggregation, based on in vitro studies using anticoagulated blood. However subsequent studies have shown that it is not absolutely required for thrombus formation in vivo. Enhances expression of SELP in activated platelets. Maternal fibrinogen is essential for successful pregnancy. Fibrin deposition is also associated with infection, where it protects against IFNG-mediated hemorrhage. May also facilitate the antibacterial immune response via both innate and T-cell mediated pathways. The polypeptide is Fibrinogen beta chain (FGB) (Capra hircus (Goat)).